The sequence spans 851 residues: UPF0182 protein CYA_1810 (851 aa).

Transmembrane regions (helical) follow at residues 7 to 27 (GLVLLLWAGLGILAITALASF), 47 to 67 (VLARWGLGLGAFAFALAVVGS), 76 to 96 (ASTAGAWAIALGLSGGLAWSL), 141 to 161 (FNLVLLTLITVALIYLVELGL), 168 to 188 (LALSLFAQRHLLILGGALFLL), 220 to 240 (LPATTLMSGVAFLTAVGFWAL), and 259 to 279 (WASSLLAPALLWGAYLGFGLL).

This sequence belongs to the UPF0182 family.

It localises to the cell membrane. This chain is UPF0182 protein CYA_1810, found in Synechococcus sp. (strain JA-3-3Ab) (Cyanobacteria bacterium Yellowstone A-Prime).